The chain runs to 74 residues: Defensin J1-2 (74 aa).

The first 27 residues, 1 to 27 (MAGFSKVIATIFLMMMLVFATGMVAEA), serve as a signal peptide directing secretion. Intrachain disulfides connect Cys30–Cys74, Cys41–Cys61, Cys47–Cys68, and Cys51–Cys70.

It belongs to the DEFL family. Monomer. In terms of tissue distribution, expressed in flowers and in young fruits.

The protein resides in the secreted. Its function is as follows. Plant defense peptide with antifungal activity against F.oxysporum and B.cinerea. The polypeptide is Defensin J1-2 (Capsicum annuum (Capsicum pepper)).